The sequence spans 291 residues: Sulfotransferase 1A1 (291 aa).

3'-phosphoadenylyl sulfate is bound at residue 44 to 49 (KSGTTW). 102–104 (KTH) is a binding site for substrate. Residue histidine 104 is the Proton acceptor of the active site. Residues arginine 126, serine 134, tyrosine 189, 223–228 (TSFKKM), and 251–255 (FMRKG) contribute to the 3'-phosphoadenylyl sulfate site. A Phosphoserine modification is found at serine 134.

Belongs to the sulfotransferase 1 family. Homodimer. Post-translationally, the N-terminus is blocked. Liver, kidney, heart and colon.

It localises to the cytoplasm. It catalyses the reaction a phenol + 3'-phosphoadenylyl sulfate = an aryl sulfate + adenosine 3',5'-bisphosphate + H(+). The enzyme catalyses 17beta-estradiol + 3'-phosphoadenylyl sulfate = 17beta-estradiol 3-sulfate + adenosine 3',5'-bisphosphate + H(+). The catalysed reaction is 4-ethylphenol + 3'-phosphoadenylyl sulfate = 4-ethylphenyl sulfate + adenosine 3',5'-bisphosphate + H(+). It carries out the reaction 4-nitrophenol + 3'-phosphoadenylyl sulfate = 4-nitrophenyl sulfate + adenosine 3',5'-bisphosphate. It catalyses the reaction dopamine + 3'-phosphoadenylyl sulfate = dopamine 3-O-sulfate + adenosine 3',5'-bisphosphate + H(+). The enzyme catalyses dopamine + 3'-phosphoadenylyl sulfate = dopamine 4-O-sulfate + adenosine 3',5'-bisphosphate + H(+). The catalysed reaction is 3,3',5-triiodo-L-thyronine + 3'-phosphoadenylyl sulfate = 3,3',5-triiodo-L-thyronine sulfate + adenosine 3',5'-bisphosphate + H(+). It carries out the reaction 3,3',5'-triiodo-L-thyronine + 3'-phosphoadenylyl sulfate = 3,3',5'-triiodo-L-thyronine sulfate + adenosine 3',5'-bisphosphate + H(+). It catalyses the reaction 3,3'-diiodo-L-thyronine + 3'-phosphoadenylyl sulfate = 3,3'-diiodo-L-thyronine sulfate + adenosine 3',5'-bisphosphate + H(+). The enzyme catalyses L-thyroxine + 3'-phosphoadenylyl sulfate = L-thyroxine sulfate + adenosine 3',5'-bisphosphate + H(+). Sulfotransferase that utilizes 3'-phospho-5'-adenylyl sulfate (PAPS) as sulfonate donor to catalyze the sulfate conjugation of a wide variety of acceptor molecules bearing a hydroxyl or an amine group. Sulfonation increases the water solubility of most compounds, and therefore their renal excretion, but it can also result in bioactivation to form active metabolites. Displays broad substrate specificity for small phenolic compounds. Plays an important roles in the sulfonation of endogenous molecules such as steroid hormones. Mediates the sulfate conjugation of a variety of xenobiotics, including the drugs acetaminophen and minoxidil. Mediates also the metabolic activation of carcinogenic N-hydroxyarylamines leading to highly reactive intermediates capable of forming DNA adducts, potentially resulting in mutagenesis. May play a role in gut microbiota-host metabolic interaction. O-sulfonates 4-ethylphenol (4-EP), a dietary tyrosine-derived metabolite produced by gut bacteria. The product 4-EPS crosses the blood-brain barrier and may negatively regulate oligodendrocyte maturation and myelination, affecting the functional connectivity of different brain regions associated with the limbic system. Catalyzes the sulfate conjugation of dopamine. Catalyzes the sulfation of T4 (L-thyroxine/3,5,3',5'-tetraiodothyronine), T3 (3,5,3'-triiodothyronine), rT3 (3,3',5'-triiodothyronine) and 3,3'-T2 (3,3'-diiodothyronine), with a substrate preference of 3,3'-T2 &gt; rT3 &gt; T3 &gt; T4. The sequence is that of Sulfotransferase 1A1 (Sult1a1) from Rattus norvegicus (Rat).